A 1390-amino-acid chain; its full sequence is DNA-directed RNA polymerase subunit beta (1390 aa).

It belongs to the RNA polymerase beta chain family. As to quaternary structure, the RNAP catalytic core consists of 2 alpha, 1 beta, 1 beta' and 1 omega subunit. When a sigma factor is associated with the core the holoenzyme is formed, which can initiate transcription.

It catalyses the reaction RNA(n) + a ribonucleoside 5'-triphosphate = RNA(n+1) + diphosphate. In terms of biological role, DNA-dependent RNA polymerase catalyzes the transcription of DNA into RNA using the four ribonucleoside triphosphates as substrates. This is DNA-directed RNA polymerase subunit beta from Gluconobacter oxydans (strain 621H) (Gluconobacter suboxydans).